A 39-amino-acid chain; its full sequence is Beta-theraphotoxin-Cm2a (39 aa).

Intrachain disulfides connect C7-C21, C14-C26, and C20-C33. Phenylalanine amide is present on F39.

As to expression, expressed by the venom gland.

It localises to the secreted. Functionally, inhibits mammalian voltage-gated sodium channel subtypes Nav1.5/SCN5A and Nav1.8/SCN10A by shifting the voltage dependence of channel activation to more depolarized potentials and by blocking the inward component of the sodium current. In vivo, this toxin causes erect, elevated tail, initial partial ataxia, followed by recovery over approximately 1 hour after injection and the progressive development of shaking. Although paralysis subsides, the body tremors never cease and persist until the end of the experiment. This is Beta-theraphotoxin-Cm2a from Ceratogyrus marshalli (Straighthorned baboon tarantula).